The primary structure comprises 305 residues: DNA-directed RNA polymerase 35 kDa subunit (305 aa).

It belongs to the poxviridae DNA-directed RNA polymerase 35 kDa subunit family. In terms of assembly, the DNA-dependent RNA polymerase used for intermediate and late genes expression consists of eight subunits 147 kDa, 133 kDa, 35 kDa, 30 kDa, 22 kDa, 19 kDa, 18 kDa and 7 kDa totalling more than 500 kDa in mass. The same holoenzyme, with the addition of the transcription-specificity factor RAP94, is used for early gene expression.

It localises to the virion. The enzyme catalyses RNA(n) + a ribonucleoside 5'-triphosphate = RNA(n+1) + diphosphate. Part of the DNA-dependent RNA polymerase which catalyzes the transcription of viral DNA into RNA using the four ribonucleoside triphosphates as substrates. Responsible for the transcription of early, intermediate and late genes. DNA-dependent RNA polymerase associates with the early transcription factor (ETF), itself composed of D6 and A7, thereby allowing the early genes transcription. Late transcription, and probably also intermediate transcription, require newly synthesized RNA polymerase. The protein is DNA-directed RNA polymerase 35 kDa subunit (RPO35) of Homo sapiens (Human).